A 132-amino-acid polypeptide reads, in one-letter code: Small ribosomal subunit protein uS8 (132 aa).

It belongs to the universal ribosomal protein uS8 family. In terms of assembly, part of the 30S ribosomal subunit. Contacts proteins S5 and S12.

Functionally, one of the primary rRNA binding proteins, it binds directly to 16S rRNA central domain where it helps coordinate assembly of the platform of the 30S subunit. The polypeptide is Small ribosomal subunit protein uS8 (Bartonella henselae (strain ATCC 49882 / DSM 28221 / CCUG 30454 / Houston 1) (Rochalimaea henselae)).